The sequence spans 225 residues: Probable septum site-determining protein MinC (225 aa).

This sequence belongs to the MinC family. As to quaternary structure, interacts with MinD and FtsZ.

In terms of biological role, cell division inhibitor that blocks the formation of polar Z ring septums. Rapidly oscillates between the poles of the cell to destabilize FtsZ filaments that have formed before they mature into polar Z rings. Prevents FtsZ polymerization. In Listeria monocytogenes serotype 4a (strain HCC23), this protein is Probable septum site-determining protein MinC.